Here is a 294-residue protein sequence, read N- to C-terminus: ATP synthase gamma chain (294 aa).

This sequence belongs to the ATPase gamma chain family. In terms of assembly, F-type ATPases have 2 components, CF(1) - the catalytic core - and CF(0) - the membrane proton channel. CF(1) has five subunits: alpha(3), beta(3), gamma(1), delta(1), epsilon(1). CF(0) has three main subunits: a, b and c.

It is found in the cell inner membrane. In terms of biological role, produces ATP from ADP in the presence of a proton gradient across the membrane. The gamma chain is believed to be important in regulating ATPase activity and the flow of protons through the CF(0) complex. The polypeptide is ATP synthase gamma chain (Paraburkholderia phytofirmans (strain DSM 17436 / LMG 22146 / PsJN) (Burkholderia phytofirmans)).